The chain runs to 276 residues: Elongation factor Ts (276 aa).

The segment at 76-79 is involved in Mg(2+) ion dislocation from EF-Tu; the sequence is TDFV.

This sequence belongs to the EF-Ts family.

The protein localises to the cytoplasm. Associates with the EF-Tu.GDP complex and induces the exchange of GDP to GTP. It remains bound to the aminoacyl-tRNA.EF-Tu.GTP complex up to the GTP hydrolysis stage on the ribosome. This is Elongation factor Ts from Mycobacterium leprae (strain Br4923).